The following is a 301-amino-acid chain: Ribonuclease Z (301 aa).

Residues His61, His63, Asp65, His66, His140, Asp211, and His269 each coordinate Zn(2+). The active-site Proton acceptor is Asp65.

Belongs to the RNase Z family. As to quaternary structure, homodimer. Zn(2+) serves as cofactor.

The enzyme catalyses Endonucleolytic cleavage of RNA, removing extra 3' nucleotides from tRNA precursor, generating 3' termini of tRNAs. A 3'-hydroxy group is left at the tRNA terminus and a 5'-phosphoryl group is left at the trailer molecule.. Its function is as follows. Zinc phosphodiesterase, which displays some tRNA 3'-processing endonuclease activity. Probably involved in tRNA maturation, by removing a 3'-trailer from precursor tRNA. The protein is Ribonuclease Z of Bradyrhizobium diazoefficiens (strain JCM 10833 / BCRC 13528 / IAM 13628 / NBRC 14792 / USDA 110).